We begin with the raw amino-acid sequence, 576 residues long: Formate--tetrahydrofolate ligase 1 (576 aa).

69–76 (TPLGEGKT) is an ATP binding site.

Belongs to the formate--tetrahydrofolate ligase family.

The catalysed reaction is (6S)-5,6,7,8-tetrahydrofolate + formate + ATP = (6R)-10-formyltetrahydrofolate + ADP + phosphate. It functions in the pathway one-carbon metabolism; tetrahydrofolate interconversion. The polypeptide is Formate--tetrahydrofolate ligase 1 (Rubrobacter xylanophilus (strain DSM 9941 / JCM 11954 / NBRC 16129 / PRD-1)).